The sequence spans 80 residues: Protein UL148A (80 aa).

A helical membrane pass occupies residues 10 to 30; the sequence is WIPVCVVVVMTSVVLFAGLHV.

The protein localises to the host membrane. In terms of biological role, plays a role in the down-regulation of the host NKG2D ligand MICA by utilizing the lysosomal pathway for its degradation. In turn, MICA reduction diminishes NK-cell killing of HCMV-infected cells. This is Protein UL148A (UL148A) from Human cytomegalovirus (strain Merlin) (HHV-5).